The following is a 217-amino-acid chain: Protein GrpE (217 aa).

Belongs to the GrpE family. Homodimer.

It is found in the cytoplasm. Its function is as follows. Participates actively in the response to hyperosmotic and heat shock by preventing the aggregation of stress-denatured proteins, in association with DnaK and GrpE. It is the nucleotide exchange factor for DnaK and may function as a thermosensor. Unfolded proteins bind initially to DnaJ; upon interaction with the DnaJ-bound protein, DnaK hydrolyzes its bound ATP, resulting in the formation of a stable complex. GrpE releases ADP from DnaK; ATP binding to DnaK triggers the release of the substrate protein, thus completing the reaction cycle. Several rounds of ATP-dependent interactions between DnaJ, DnaK and GrpE are required for fully efficient folding. In Mycoplasma pneumoniae (strain ATCC 29342 / M129 / Subtype 1) (Mycoplasmoides pneumoniae), this protein is Protein GrpE.